The primary structure comprises 1909 residues: Endoribonuclease Dicer homolog 1 (1909 aa).

Residues 99-177 (TVKENGLQKN…NNKKKRECNN (79 aa)) form a disordered region. Residues 110–124 (GKRDEFSKEEGDKDR) show a composition bias toward basic and acidic residues. Residues 131–146 (SYQSERSNLSGRGHVN) show a composition bias toward polar residues. The segment covering 147–177 (NSREGDRFMNRKRTRNWDEAGNNKKKRECNN) has biased composition (basic and acidic residues). Positions 256–433 (VLEQAKAKNT…QVDCAIKIRN (178 aa)) constitute a Helicase ATP-binding domain. 269–276 (LETGAGKT) contacts ATP. Residues 378–381 (DECH) carry the DECH box motif. The 162-residue stretch at 651–812 (SLIKLLLKYQ…RTDLSHLKDT (162 aa)) folds into the Helicase C-terminal domain. The Dicer dsRNA-binding fold domain maps to 840–935 (AVGLVHFYCS…LPDKGSGQDA (96 aa)). Residues 929–952 (KGSGQDAEKADQDDEGEPVPGTAR) are disordered. The PAZ domain maps to 1189-1318 (EVEEDLSKGK…LPPELCVVHP (130 aa)). 2 RNase III domains span residues 1342–1518 (LAVQ…VEGG) and 1559–1707 (FVGL…LDSG). Positions 1597, 1693, and 1696 each coordinate Mg(2+). 2 DRBM domains span residues 1733–1796 (HPVR…ALKE) and 1831–1906 (FTRQ…LLNK). The interval 1801 to 1831 (ESKEKHINNGNAGEDQGENENGNKKNGHQPF) is disordered.

Belongs to the helicase family. Dicer subfamily. Interacts (via N-terminus) with DDL. Interacts (via DRBM domains) with DRB1, DRB2 and DRB5. May interact with AGO1 or AGO10 through their common PAZ domains. Mg(2+) is required as a cofactor. Mn(2+) serves as cofactor. In terms of tissue distribution, highly expressed in flowers and seeds and detected in leaves and stems. Found in ovule integuments, inflorescence and floral meristems, stigma of flowers until just before pollination, vasculature of the funiculus, and embryo.

It localises to the nucleus. In terms of biological role, ribonuclease (RNase) III involved in RNA-mediated post-transcriptional gene silencing (PTGS). Functions in the microRNAs (miRNAs) biogenesis pathway by cleaving primary miRNAs (pri-miRNAs) and precursor miRNAs (pre-miRNAs). Functions with DRB1/HYL1 and SERRATE proteins for accurate pri-miRNAs to miRNAs processing. Indirectly involved in the production of trans-acting small interfering RNAs (ta-siRNAs) derived from the TAS1, TAS2 or TAS3 endogenous transcripts by participating in the production of their initiating miRNAs. Involved in the processing of natural siRNAs (nat-siRNAs, derived from cis-natural antisense transcripts) by cleaving 24 nucleotide nat-siRNAs into 21 nucleotide nat-siRNAs. Can produce RDR6-dependent endogenous ta-siRNAs derived from TAS1 and TAS2. Required for the production of 30-40 nucleotide bacterial-induced long siRNAs (lsiRNA). Acts redundantly with DICER-LIKE 3 (DCL3) to promote flowering via repression of FLOWERING LOCUS C (FLC). Represses antiviral RNA silencing through negative regulation of the expression of DCL4 and DCL3. This is Endoribonuclease Dicer homolog 1 (DCL1) from Arabidopsis thaliana (Mouse-ear cress).